The following is an 85-amino-acid chain: Insecticidal toxin Vn1 (85 aa).

An N-terminal signal peptide occupies residues 1–23 (MFLYRLICLFILICIITVDISTS). A disulfide bridge links cysteine 71 with cysteine 84.

Highly expressed in the venom apparatus, and weakly expressed in residual body.

It localises to the secreted. Its function is as follows. Endoparasitoid venom toxin that exhibits insecticidal activity against Tenebrio molitor pupae. Impacts genes related to immune response, environmental information processing, metabolism, and response to external stimuli in T.molitor, suggesting its involvement in the intricate parasitoid wasp-host interaction. This is Insecticidal toxin Vn1 from Aphidius gifuensis (Parasitoid wasp).